We begin with the raw amino-acid sequence, 176 residues long: Small ribosomal subunit protein uS4 (176 aa).

One can recognise an S4 RNA-binding domain in the interval 104-166 (RRLQTIVYKK…PTSPFKQNPP (63 aa)).

This sequence belongs to the universal ribosomal protein uS4 family. As to quaternary structure, part of the 30S ribosomal subunit. Contacts protein S5. The interaction surface between S4 and S5 is involved in control of translational fidelity.

One of the primary rRNA binding proteins, it binds directly to 16S rRNA where it nucleates assembly of the body of the 30S subunit. Functionally, with S5 and S12 plays an important role in translational accuracy. This is Small ribosomal subunit protein uS4 (rps4) from Sulfolobus acidocaldarius (strain ATCC 33909 / DSM 639 / JCM 8929 / NBRC 15157 / NCIMB 11770).